The sequence spans 630 residues: FAST kinase domain-containing protein 4 (630 aa).

The RAP domain maps to 560–618 (IAFLRWEFPNFNSRSKDLLGRFVLARRHVLAAGFLVVDVPYYEWLDLKSEWQKSAYLKD).

This sequence belongs to the FAST kinase family. Expression detected in spleen, testis, colon, heart, smooth muscle, kidney, brain, lung, liver, brown and white adipose tissue with highest expression in testis, heart, smooth muscle and brown adipose tissue.

It is found in the mitochondrion matrix. Functionally, plays a role in processing of mitochondrial RNA precursors and in stabilization of a subset of mature mitochondrial RNA species, such as MT-CO1, MT-CO2, MT-CYB, MT-CO3, MT-ND3, MT-ND5 and MT-ATP8/6. May play a role in cell cycle progression. This is FAST kinase domain-containing protein 4 (Tbrg4) from Mus musculus (Mouse).